Here is a 393-residue protein sequence, read N- to C-terminus: MKYLIGIIGLIVFLGLAWIASSGKKRIKIRPIVVMLILQFILGYILLNTGIGNFLVGGFAKGFGYLLEYAAEGINFVFGGLVNADQTTFFMNVLLPIVFISALIGILQKWKVLPFIIRYIGLALSKVNGMGRLESYNAVASAILGQSEVFISLKKELGLLNQQRLYTLCASAMSTVSMSIVGAYMTMLKPEYVVTALVLNLFGGFIIASIINPYEVAKEEDMLRVEEEEKQSFFEVLGEYILDGFKVAVVVAAMLIGFVAIIALINGIFNAVFGISFQGILGYVFAPFAFLVGIPWNEAVNAGSIMATKMVSNEFVAMTSLTQNGFHFSGRTTAIVSVFLVSFANFSSIGIIAGAVKGLNEKQGNVVARFGLKLLYGATLVSFLSAAIVGLIY.

9 helical membrane-spanning segments follow: residues 3–23 (YLIG…ASSG), 32–52 (IVVM…TGIG), 87–107 (TTFF…IGIL), 168–188 (LCAS…MTML), 191–211 (EYVV…ASII), 249–269 (VVVA…NGIF), 272–292 (VFGI…AFLV), 334–354 (AIVS…IIAG), and 372–392 (LKLL…VGLI).

The protein belongs to the concentrative nucleoside transporter (CNT) (TC 2.A.41) family.

Its subcellular location is the cell membrane. Its function is as follows. Transport of the pyrimidine nucleoside uridine. In Bacillus subtilis (strain 168), this protein is Nucleoside permease NupC.